A 212-amino-acid chain; its full sequence is Tetraspanin-31-A (212 aa).

Residues 1-12 (MVCGGFTCSKNA) lie on the Cytoplasmic side of the membrane. The chain crosses the membrane as a helical span at residues 13–33 (LCALNVVYMLVGLLLIGVAAW). Residues 34-44 (GKGFGIVSSIH) are Extracellular-facing. Residues 45–65 (IIGGVIAIGVFLLLIAIIGLI) traverse the membrane as a helical segment. At 66–72 (GAVSHHQ) the chain is on the cytoplasmic side. The helical transmembrane segment at 73-93 (VMLFIYMVVLILVFIFQFIVS) threads the bilayer. Topologically, residues 94-175 (CSCLAMNRSQ…MLNHADEALK (82 aa)) are extracellular. 4 N-linked (GlcNAc...) asparagine glycosylation sites follow: Asn-100, Asn-109, Asn-117, and Asn-134. A helical membrane pass occupies residues 176–196 (ILGGVGLFFSFTEILGVWLAF). The Cytoplasmic portion of the chain corresponds to 197-212 (RFRNQKDPRANPSAFL).

The protein belongs to the tetraspanin (TM4SF) family.

The protein localises to the membrane. The polypeptide is Tetraspanin-31-A (tspan31-a) (Xenopus laevis (African clawed frog)).